A 670-amino-acid chain; its full sequence is Sodium/glucose cotransporter 2 (670 aa).

Residues methionine 1–asparagine 20 lie on the Extracellular side of the membrane. The chain crosses the membrane as a helical span at residues proline 21–methionine 42. Topologically, residues phenylalanine 43–valine 61 are cytoplasmic. The helical transmembrane segment at tryptophan 62–alanine 83 threads the bilayer. Positions 71 and 74 each coordinate Na(+). The Extracellular segment spans residues glycine 84–leucine 91. A helical transmembrane segment spans residues alanine 92–valine 112. Residues proline 113–arginine 134 are Cytoplasmic-facing. Residues arginine 135–isoleucine 164 traverse the membrane as a helical segment. Residues glutamine 165–asparagine 171 lie on the Extracellular side of the membrane. Helical transmembrane passes span isoleucine 172–alanine 193 and alanine 194–glycine 215. At tyrosine 216 to proline 273 the chain is on the extracellular side. Asparagine 248 is a glycosylation site (N-linked (GlcNAc...) asparagine). 4 disulfides stabilise this stretch: cysteine 253–cysteine 509, cysteine 343–cysteine 349, cysteine 353–cysteine 359, and cysteine 515–cysteine 520. The chain crosses the membrane as a helical span at residues tryptophan 274–glutamine 293. At valine 294 to histidine 307 the chain is on the cytoplasmic side. The chain crosses the membrane as a helical span at residues isoleucine 308–proline 329. Topologically, residues glycine 330–proline 373 are extracellular. Residues asparagine 374 to threonine 404 traverse the membrane as a helical segment. Na(+)-binding residues include alanine 387, serine 390, and serine 391. Over methionine 405–leucine 422 the chain is Cytoplasmic. A helical membrane pass occupies residues valine 423–alanine 444. Residues alanine 445 to glutamine 449 are Extracellular-facing. A helical transmembrane segment spans residues leucine 450 to valine 475. Over proline 476 to glutamate 480 the chain is Cytoplasmic. Residues lysine 481–phenylalanine 503 traverse the membrane as a helical segment. At phenylalanine 504–arginine 521 the chain is on the extracellular side. Residues valine 522 to cysteine 545 form a helical membrane-spanning segment. Residues threonine 546 to arginine 649 lie on the Cytoplasmic side of the membrane. The helical transmembrane segment at valine 650–phenylalanine 668 threads the bilayer. At tyrosine 669–alanine 670 the chain is on the extracellular side.

The protein belongs to the sodium:solute symporter (SSF) (TC 2.A.21) family. As to quaternary structure, forms a heterodimer (via TM13) with PDZK1IP1 (via N-terminal transmembrane helix); this interaction enhances SLC5A2 transporter activity. Glycosylated at a single site. As to expression, kidney, in proximal tubule S1 segments.

It localises to the apical cell membrane. It carries out the reaction D-glucose(out) + Na(+)(out) = D-glucose(in) + Na(+)(in). With respect to regulation, enhanced by the interaction with PDZK1IP1/MAP17. In terms of biological role, electrogenic Na(+)-coupled sugar symporter that actively transports D-glucose at the plasma membrane, with a Na(+) to sugar coupling ratio of 1:1. Transporter activity is driven by a transmembrane Na(+) electrochemical gradient set by the Na(+)/K(+) pump. Unlike SLC5A1/SGLT1, requires the auxiliary protein PDZK1IP1/MAP17 for full transporter activity. Has a primary role in D-glucose reabsorption from glomerular filtrate across the brush border of the early proximal tubules of the kidney. The sequence is that of Sodium/glucose cotransporter 2 (Slc5a2) from Rattus norvegicus (Rat).